The primary structure comprises 443 residues: SURP and G-patch domain-containing protein 1-like protein (443 aa).

Disordered stretches follow at residues 45 to 71 and 83 to 141; these read IISNPKPAANKISIGLKPNDAQKKGGK and LAPP…TVKK. One copy of the SURP motif repeat lies at 142 to 185; the sequence is VADKLASFVAKHGRPFEHITRQKNPGDTPFKFLFDENCADYKYY. Disordered stretches follow at residues 198–221, 241–272, and 285–325; these read QTKDSGVLHSGDAGSRTSTAAIPL, TPVEPGASSRSAQASITRPSDSDSFSGPRGAD, and AQEE…HHMG. A compositionally biased stretch (polar residues) spans 248–265; that stretch reads SSRSAQASITRPSDSDSF. The segment covering 285–300 has biased composition (basic and acidic residues); sequence AQEEKMRRPRQSKDEM. Polar residues predominate over residues 307–316; that stretch reads QGPSETSSTD. The G-patch domain occupies 360–407; that stretch reads ADNVGHKLLSKMGWKEGEGIGSSRKGMADPIMAGDVKTNNLGVGASAP.

It localises to the nucleus. The chain is SURP and G-patch domain-containing protein 1-like protein from Arabidopsis thaliana (Mouse-ear cress).